The chain runs to 321 residues: MITAPFFTLDRRDLLGIEGLSAPEIVGLLDLAEEFVVLNRQIEKKRSTLRGRTQVNLFFEASTRTQSSFELAGKRLGADVMNMSVGNSSVKKGETLIDTAMTLNAMRPDILVVRHHASGAVALLARKVDCCVVNAGDGAHEHPTQALLDALTIRRNKGRIEGLTVAVCGDVLHSRVARSNILLLHTLGARVRVVAPSTLLPTGIENFGVEVHRSMESGLEGADIVMMLRLQRERMAGSFIPSVKEYFHYYGLDEAKLKRAKPDALVMHPGPMNRGVEIDSAVADGAQSLIREQVEMGVAVRMAVLDALARKLPNATGAERD.

Arg64 and Thr65 together coordinate carbamoyl phosphate. Lys92 serves as a coordination point for L-aspartate. The carbamoyl phosphate site is built by Arg114, His142, and Gln145. Residues Arg175 and Arg229 each coordinate L-aspartate. Carbamoyl phosphate-binding residues include Gly270 and Pro271.

Belongs to the aspartate/ornithine carbamoyltransferase superfamily. ATCase family. In terms of assembly, heterododecamer (2C3:3R2) of six catalytic PyrB chains organized as two trimers (C3), and six regulatory PyrI chains organized as three dimers (R2).

The enzyme catalyses carbamoyl phosphate + L-aspartate = N-carbamoyl-L-aspartate + phosphate + H(+). It participates in pyrimidine metabolism; UMP biosynthesis via de novo pathway; (S)-dihydroorotate from bicarbonate: step 2/3. In terms of biological role, catalyzes the condensation of carbamoyl phosphate and aspartate to form carbamoyl aspartate and inorganic phosphate, the committed step in the de novo pyrimidine nucleotide biosynthesis pathway. The polypeptide is Aspartate carbamoyltransferase catalytic subunit (Azorhizobium caulinodans (strain ATCC 43989 / DSM 5975 / JCM 20966 / LMG 6465 / NBRC 14845 / NCIMB 13405 / ORS 571)).